A 488-amino-acid chain; its full sequence is MSKPIIFLLTAFVVLTDLGATEDTEKVEVKAKPSKTSRGAIGQGFELHKIDLLSKELQGTGAQVFEELPVEECTTDNKLGTIQKDDTFYSNTESLYNSVASNSKIEPSLKGPFTLGTSVGAVTNNIVSEKSEIQGLSLNLKAYSMIHALKQDCINKKPLAKDLVSDFEALDREVKKPWLKPSWRKYKVFLEKFGTHIVRETMSGSSIYQYVFAKSSESFKQRDFKIKACLSLGGPTQVGKLGISACSDVSKKDVEESSGKEMVKKLVVRGGKSDTRVDLTGELSKNQINKFLKEATTDPSPIQYTFYPVWTILKARYIGKEHYAKATNLEQFYKGYLNFDCAYEKSEKGLELQKFELAEDSDPDAPTYVCKLGPEGCHSDDDCESDDLIYCACCGDSCIRYNNTVLLSTGDTKKVAFINDVDDEFRDHGCGRKGLKCKCKEENKKWGQSWSGDSDADAALRDINAMMLDQNRRDQAKRHHVKKGKSLH.

Positions 1-21 are cleaved as a signal peptide; sequence MSKPIIFLLTAFVVLTDLGAT. Positions 24 to 344 constitute an MACPF domain; it reads TEKVEVKAKP…GYLNFDCAYE (321 aa). Residues 369–398 form the EGF-like domain; that stretch reads VCKLGPEGCHSDDDCESDDLIYCACCGDSC. 3 disulfide bridges follow: Cys370–Cys383, Cys377–Cys391, and Cys393–Cys398.

The protein localises to the secreted. The protein resides in the nematocyst. In terms of biological role, causes lethal toxicity to the shrimp Palaemon paucidence, and hemolytic activity toward sheep red blood cells. This is DELTA-alicitoxin-Pse2b from Phyllodiscus semoni (Night anemone).